A 691-amino-acid chain; its full sequence is Ribonucleoprotein PTB-binding 2 (691 aa).

Positions 1–30 are enriched in gly residues; the sequence is MAAAAGDGGGEGGAGLGSAAGLGPGPGLRG. The disordered stretch occupies residues 1–47; sequence MAAAAGDGGGEGGAGLGSAAGLGPGPGLRGQGPSAEAHEGAPDPMPA. An N-acetylalanine modification is found at Ala2. 3 consecutive RRM domains span residues 69–140, 142–220, and 231–309; these read RKIL…LQPT, ALLC…WMDV, and KCLC…FCAP. Disordered regions lie at residues 492 to 522 and 543 to 574; these read PNQH…EGNF and GHHK…GEPP. Polar residues predominate over residues 548-569; sequence QQSQPKGTEISSGAASKNQTSL.

In terms of assembly, interacts with PTBP1 and RAVER1.

Its subcellular location is the nucleus. The protein resides in the cytoplasm. Functionally, may bind single-stranded nucleic acids. The protein is Ribonucleoprotein PTB-binding 2 (RAVER2) of Homo sapiens (Human).